Reading from the N-terminus, the 301-residue chain is GTPase Era (301 aa).

The Era-type G domain occupies 7-175 (YCGFVAIVGR…AAIVRKHLPE (169 aa)). The tract at residues 15 to 22 (GRPNVGKS) is G1. 15–22 (GRPNVGKS) is a GTP binding site. The interval 41 to 45 (QTTRH) is G2. The tract at residues 62-65 (DTPG) is G3. GTP-binding positions include 62–66 (DTPGL) and 124–127 (NKVD). Residues 124–127 (NKVD) are G4. The interval 154–156 (ISA) is G5. The 78-residue stretch at 206–283 (LGAELPYSVT…HLELWVKVKS (78 aa)) folds into the KH type-2 domain.

This sequence belongs to the TRAFAC class TrmE-Era-EngA-EngB-Septin-like GTPase superfamily. Era GTPase family. As to quaternary structure, monomer.

The protein resides in the cytoplasm. The protein localises to the cell inner membrane. In terms of biological role, an essential GTPase that binds both GDP and GTP, with rapid nucleotide exchange. Plays a role in 16S rRNA processing and 30S ribosomal subunit biogenesis and possibly also in cell cycle regulation and energy metabolism. The chain is GTPase Era from Klebsiella pneumoniae subsp. pneumoniae (strain ATCC 700721 / MGH 78578).